The chain runs to 134 residues: Cytochrome b5 (134 aa).

The region spanning 5–81 (KKVLGFEEVS…MEKYYIGEID (77 aa)) is the Cytochrome b5 heme-binding domain. Heme-binding residues include H40 and H64. Residues 107–127 (FMIKILQFLVPILILGLALVV) form a helical membrane-spanning segment.

Belongs to the cytochrome b5 family.

The protein resides in the endoplasmic reticulum membrane. The protein localises to the microsome membrane. Functionally, membrane bound hemoprotein which function as an electron carrier for several membrane bound oxygenases. The sequence is that of Cytochrome b5 (CYB5) from Brassica oleracea var. botrytis (Cauliflower).